The primary structure comprises 383 residues: S-adenosylmethionine:tRNA ribosyltransferase-isomerase (383 aa).

The protein belongs to the QueA family. In terms of assembly, monomer.

It is found in the cytoplasm. It catalyses the reaction 7-aminomethyl-7-carbaguanosine(34) in tRNA + S-adenosyl-L-methionine = epoxyqueuosine(34) in tRNA + adenine + L-methionine + 2 H(+). Its pathway is tRNA modification; tRNA-queuosine biosynthesis. Functionally, transfers and isomerizes the ribose moiety from AdoMet to the 7-aminomethyl group of 7-deazaguanine (preQ1-tRNA) to give epoxyqueuosine (oQ-tRNA). The polypeptide is S-adenosylmethionine:tRNA ribosyltransferase-isomerase (Rickettsia prowazekii (strain Madrid E)).